A 341-amino-acid chain; its full sequence is MKDNYILAFETSCDETSVAILKNGSELLCNIIASQINSHKRFGGVVPEIASRHHVEQITVCIEAALEEAEISADQLTAVAVTEGPGLNGALLVGIMAAKTFAWANHLPLIPVNHMAGHLMAASLVDTIEYPAMALLVSGGHSELVYVEKEGSYKKVGETRDDAAGEAYDKVGRVMGLTYPSGKVIDELAHKGQDTYNFPRAMMNTHEVEFSFSGLKSAFINLVHNENQKGNDVIANDLENLAASFQVAVVDVLMAKTKLAMEKYPVKTLIIGGGVSANQGLRERLSAEITDEKLIIPPLRLCGDNAGMIAAAAYIEWKKGLENVQAGLDLNAKPSLVFEDM.

Residues histidine 114 and histidine 118 each contribute to the Fe cation site. Substrate contacts are provided by residues 136 to 140 (LVSGG), aspartate 169, glycine 182, aspartate 186, and asparagine 278. Fe cation is bound at residue aspartate 304.

This sequence belongs to the KAE1 / TsaD family. The cofactor is Fe(2+).

Its subcellular location is the cytoplasm. It catalyses the reaction L-threonylcarbamoyladenylate + adenosine(37) in tRNA = N(6)-L-threonylcarbamoyladenosine(37) in tRNA + AMP + H(+). Functionally, required for the formation of a threonylcarbamoyl group on adenosine at position 37 (t(6)A37) in tRNAs that read codons beginning with adenine. Is involved in the transfer of the threonylcarbamoyl moiety of threonylcarbamoyl-AMP (TC-AMP) to the N6 group of A37, together with TsaE and TsaB. TsaD likely plays a direct catalytic role in this reaction. In Lactococcus lactis subsp. cremoris (strain MG1363), this protein is tRNA N6-adenosine threonylcarbamoyltransferase.